Consider the following 64-residue polypeptide: Large ribosomal subunit protein bL35 (64 aa).

Residues 1-10 show a composition bias toward polar residues; the sequence is MPKMKTNSAA. Residues 1-64 are disordered; it reads MPKMKTNSAA…AKKLHQLLQK (64 aa). Positions 54-64 are enriched in basic residues; it reads QAKKLHQLLQK.

The protein belongs to the bacterial ribosomal protein bL35 family.

This chain is Large ribosomal subunit protein bL35, found in Bifidobacterium longum (strain NCC 2705).